Consider the following 221-residue polypeptide: GTP cyclohydrolase 1 (221 aa).

The Zn(2+) site is built by C111, H114, and C182.

It belongs to the GTP cyclohydrolase I family. Homomer.

It carries out the reaction GTP + H2O = 7,8-dihydroneopterin 3'-triphosphate + formate + H(+). It participates in cofactor biosynthesis; 7,8-dihydroneopterin triphosphate biosynthesis; 7,8-dihydroneopterin triphosphate from GTP: step 1/1. This is GTP cyclohydrolase 1 from Erwinia tasmaniensis (strain DSM 17950 / CFBP 7177 / CIP 109463 / NCPPB 4357 / Et1/99).